The sequence spans 166 residues: MIQSCRKLFRSDRCPNLHRKKPAYLEAGQRGFPEKSTRQKINYHELKHLSKVPQRPHKPTIDGQSTPTRIPVDAQTVRLSLVDLDSAEAHRTLEDAIEFASQILSVDTDGVEPLYTVLERDRLTLREDRVSDGNIQQDVLRNARVTEEEYFVAPPGNIPLEQEPKK.

The protein belongs to the GatC family. As to quaternary structure, subunit of the heterotrimeric GatCAB amidotransferase (AdT) complex, composed of A, B and C subunits.

Its subcellular location is the mitochondrion. The catalysed reaction is L-glutamyl-tRNA(Gln) + L-glutamine + ATP + H2O = L-glutaminyl-tRNA(Gln) + L-glutamate + ADP + phosphate + H(+). Allows the formation of correctly charged Gln-tRNA(Gln) through the transamidation of misacylated Glu-tRNA(Gln) in the mitochondria. The reaction takes place in the presence of glutamine and ATP through an activated gamma-phospho-Glu-tRNA(Gln). The sequence is that of Glutamyl-tRNA(Gln) amidotransferase subunit C-2, mitochondrial from Culex quinquefasciatus (Southern house mosquito).